Here is an 885-residue protein sequence, read N- to C-terminus: DNA mismatch repair protein MutS (885 aa).

626–633 (GPNMGGKS) provides a ligand contact to ATP.

The protein belongs to the DNA mismatch repair MutS family.

This protein is involved in the repair of mismatches in DNA. It is possible that it carries out the mismatch recognition step. This protein has a weak ATPase activity. The polypeptide is DNA mismatch repair protein MutS (Burkholderia cenocepacia (strain ATCC BAA-245 / DSM 16553 / LMG 16656 / NCTC 13227 / J2315 / CF5610) (Burkholderia cepacia (strain J2315))).